A 479-amino-acid polypeptide reads, in one-letter code: UDP-N-acetylmuramate--L-alanine ligase (479 aa).

Residue 128-134 participates in ATP binding; it reads GAHGKTT.

This sequence belongs to the MurCDEF family.

Its subcellular location is the cytoplasm. The catalysed reaction is UDP-N-acetyl-alpha-D-muramate + L-alanine + ATP = UDP-N-acetyl-alpha-D-muramoyl-L-alanine + ADP + phosphate + H(+). It participates in cell wall biogenesis; peptidoglycan biosynthesis. Functionally, cell wall formation. The sequence is that of UDP-N-acetylmuramate--L-alanine ligase from Psychrobacter cryohalolentis (strain ATCC BAA-1226 / DSM 17306 / VKM B-2378 / K5).